The sequence spans 1364 residues: MPTSPRRNSIATTDNVIGRNKSRKRPHSLGGPGALQELKEHTNPAKGILKSYSSFSVDPAFTGDEDFNDIHTQINNTVIGISSNVMAASKRLQMEDLQQLSRETSRKSLNRRVSFASHARVRWYPKDHQSDSEKSTSNHSTPERTFASDAKNHSPKGPTTTSFSRNETQSSPHSHSASIISDGSDMDIASPIRSTESDMVSEALNAGHPPPSLYPENDDLSIQNPTKALPEAEKALDVHDATREQVNDREETNMDLTIQFQEADSFLSHSESIKGLSSSEQGTVYSLKASHDPSNQTQLSSPNKSSSPTSIEISDFSKNNENHDQSENKEEEEDMMLTRPIEIPQHFSPIARPLTSQEAIVDMDITSNNINLSPVSHFSNGLDLQNLEEAPMNLTRPINANPHLTNHSPNDLTNGEEEMDTTSAFNIENSHLTLLSPIRPSSRSMEEQIMDLTQPISSTNAPTHLNEDDLNQFTSNISSSSKPRKDNNKTANSSKPIPDSEDFMDITRPFNILSPSKEALSEEQPMELTSTVFPCENSTSHLEVEEAAMDETVAFQIRGNNVELPSADKENAEREEIPSYSDKSENFNTTSFTNHERSPNGNNNLKFSKDPNSSSPSRHVVATPTDKLGTRKRRLRYSTSSFDQSTLRRNRLATIRNARKSISTLNDRELLPVNFFEKKVNSGLYKSVERSENYRLGATPLTAEKPFTTEKPLSSLPEEVSRQPTDDKGEQVSNADVDSGLSKTERLTIQQTNEIKHVPTNTTSSVKLPQQPSNEDEKERITTADYADSTSLERLESQEPNRNELVQVGSSNAGNTTSVGMNEHEKSPVKLSKGVSNVDTSLGASTINTNILNQDSGPNEEIPVGNEPEFDTMPTLPNVEPISLSDFLKMTGIEFLDNLTIAKRRETLLPNAEENKKCSIQELLESFYIQFPLLELYKFSCQQLQDYIAEGKDFVTKIEEETLKENPLLFYEYRKASSDMRVLMDSQFLMMKTFARLQAKGDWYEWREGLMQGIKHELNLNLTGMQRSLTHLMDVANVIHPYAQEIQERYNGSITTVQTLKKQKEFANQYDSTLLAQAQEKLEKLKVEVERRRRLLSEKEERRKELAIKIEQVTNSCSDLELRTNAEQDFYAKNQDFEFDEIKRYEEQLLNLKNELGWTIVSLTAGGIKLATNNTALSPYSAEVTVEILRQNFQVNVDIACKFPNESNACSSNVLEHVASSFSKWHSKVFSRNLRLLKKYLNDVSICWEQIVYLVQDFQRLWYHWPFLSVENDDKSIIINVELYLRSVSSKVKVVFGLPIDTIYQTTEVGKFYASTSVAVKQMYAESEGDSYVSEVLNTLSEVVHCTSTYALSSACLTVWNKYS.

Polar residues predominate over residues 1–15; sequence MPTSPRRNSIATTDN. 3 disordered regions span residues 1–36, 124–190, and 202–223; these read MPTS…GALQ, YPKD…DIAS, and EALN…LSIQ. The segment covering 124–136 has biased composition (basic and acidic residues); that stretch reads YPKDHQSDSEKST. Over residues 157–169 the composition is skewed to polar residues; the sequence is GPTTTSFSRNETQ. Over residues 170–181 the composition is skewed to low complexity; the sequence is SSPHSHSASIIS. The MELT; degenerate motif lies at 254–257; it reads MDLT. The residue at position 257 (Thr257) is a Phosphothreonine; by mph1. The tract at residues 289–334 is disordered; sequence ASHDPSNQTQLSSPNKSSSPTSIEISDFSKNNENHDQSENKEEEED. Residues 300–310 are compositionally biased toward low complexity; the sequence is SSPNKSSSPTS. Basic and acidic residues predominate over residues 318 to 328; sequence KNNENHDQSEN. Positions 450–453 match the MELT; degenerate motif; it reads MDLT. Thr453 carries the phosphothreonine; by mph1 modification. The segment at 456–503 is disordered; sequence ISSTNAPTHLNEDDLNQFTSNISSSSKPRKDNNKTANSSKPIPDSEDF. The span at 471–481 shows a compositional bias: polar residues; that stretch reads NQFTSNISSSS. The short motif at 504 to 507 is the MELT; degenerate element; the sequence is MDIT. The residue at position 507 (Thr507) is a Phosphothreonine; by mph1. 2 disordered regions span residues 564 to 643 and 697 to 837; these read LPSA…SSFD and GATP…GVSN. Basic and acidic residues predominate over residues 566–585; that stretch reads SADKENAEREEIPSYSDKSE. Over residues 586 to 617 the composition is skewed to polar residues; sequence NFNTTSFTNHERSPNGNNNLKFSKDPNSSSPS. Positions 719–730 are enriched in basic and acidic residues; that stretch reads EVSRQPTDDKGE. A compositionally biased stretch (polar residues) spans 747-773; sequence LTIQQTNEIKHVPTNTTSSVKLPQQPS. A compositionally biased stretch (basic and acidic residues) spans 791-802; sequence SLERLESQEPNR. Polar residues predominate over residues 808-820; the sequence is VGSSNAGNTTSVG. Residues 1075 to 1155 adopt a coiled-coil conformation; sequence LAQAQEKLEK…EEQLLNLKNE (81 aa). The Nuclear localization signal signature appears at 1091–1105; it reads RRRRLLSEKEERRKE.

In terms of assembly, component of the KNL1/SPC105 complex composed of at least spc7 and sos7. Part of the outer kinetochore KMN network that includes the KNL1, MIS12 and NDC80 complexes. Interacts (via C-terminus) with sos7 (via C-terminus); the interaction is direct. Interacts (when phosphorylated on MELT motifs) with bub1 and bub3; to recruit the BUB1-BUB3 complex to the kinetochore. Post-translationally, phosphorylation of threonine residues in the MELT motifs by mph1/mps1 leads to recruitment of bub1 and bub3 to the kinetochore, and is required to maintain spindle assembly checkpoint signaling.

It localises to the nucleus. Its subcellular location is the chromosome. The protein resides in the centromere. The protein localises to the kinetochore. Acts as a component of the outer kinetochore KNL1 complex that serves as a docking point for spindle assembly checkpoint components and mediates microtubule-kinetochore interactions. Kinetochores, consisting of a centromere-associated inner segment and a microtubule-contacting outer segment, play a crucial role in chromosome segregation by mediating the physical connection between centromeric DNA and spindle microtubules. The outer kinetochore is made up of the ten-subunit KMN network, comprising the MIS12, NDC80 and KNL1 complexes, and auxiliary microtubule-associated components; together they connect the outer kinetochore with the inner kinetochore, bind microtubules, and mediate interactions with mitotic checkpoint proteins that delay anaphase until chromosomes are bioriented on the spindle. Recruits the BUB1-BUB3 complex to kinetochores when phosphorylated by mph1/mps1, to support spindle assembly checkpoint signaling. Functions both in mitotic and in meiotic chromosome segregation. The protein is Outer kinetochore KNL1 complex subunit spc7 of Schizosaccharomyces pombe (strain 972 / ATCC 24843) (Fission yeast).